Consider the following 630-residue polypeptide: Biosynthetic arginine decarboxylase (630 aa).

Lys99 is subject to N6-(pyridoxal phosphate)lysine. 281–291 contributes to the substrate binding site; it reads VDIGGGLGVDY.

It belongs to the Orn/Lys/Arg decarboxylase class-II family. SpeA subfamily. Mg(2+) serves as cofactor. Requires pyridoxal 5'-phosphate as cofactor.

The enzyme catalyses L-arginine + H(+) = agmatine + CO2. Its pathway is amine and polyamine biosynthesis; agmatine biosynthesis; agmatine from L-arginine: step 1/1. In terms of biological role, catalyzes the biosynthesis of agmatine from arginine. The chain is Biosynthetic arginine decarboxylase from Phocaeicola vulgatus (strain ATCC 8482 / DSM 1447 / JCM 5826 / CCUG 4940 / NBRC 14291 / NCTC 11154) (Bacteroides vulgatus).